Consider the following 321-residue polypeptide: Ubiquitin carboxyl-terminal hydrolase ubh-4 (321 aa).

The 215-residue stretch at 6 to 220 folds into the UCH catalytic domain; the sequence is SWCLIESDPG…ITFNLMALVP (215 aa). Cys-83 acts as the Nucleophile in catalysis. Catalysis depends on His-158, which acts as the Proton donor. A ULD domain is found at 273-301; it reads NYTPFVIELMKILAKEGKLVGLVDNAYQA.

Belongs to the peptidase C12 family. In terms of assembly, interacts with proteasome 19S subunit rpn-13. As to expression, highly expressed in intestine and to a lesser extent in other tissues including muscles and neurons.

It carries out the reaction Thiol-dependent hydrolysis of ester, thioester, amide, peptide and isopeptide bonds formed by the C-terminal Gly of ubiquitin (a 76-residue protein attached to proteins as an intracellular targeting signal).. In terms of biological role, ubiquitin-protein hydrolase involved both in the processing of ubiquitin precursors and of ubiquitinated proteins. This enzyme is a thiol protease that recognizes and hydrolyzes a peptide bond at the C-terminal glycine of ubiquitin. In Caenorhabditis elegans, this protein is Ubiquitin carboxyl-terminal hydrolase ubh-4.